A 301-amino-acid polypeptide reads, in one-letter code: 33 kDa chaperonin (301 aa).

2 disulfide bridges follow: Cys-239–Cys-241 and Cys-272–Cys-275.

Belongs to the HSP33 family. In terms of processing, under oxidizing conditions two disulfide bonds are formed involving the reactive cysteines. Under reducing conditions zinc is bound to the reactive cysteines and the protein is inactive.

It is found in the cytoplasm. Functionally, redox regulated molecular chaperone. Protects both thermally unfolding and oxidatively damaged proteins from irreversible aggregation. Plays an important role in the bacterial defense system toward oxidative stress. This chain is 33 kDa chaperonin, found in Trichormus variabilis (strain ATCC 29413 / PCC 7937) (Anabaena variabilis).